Consider the following 2162-residue polypeptide: MEHVIIKQPDTGGDSVRIFVFGDQTSCNLSNLQPLLLKRSNIYLVSFVDQVNCALRHEIARLTTAERRSFPAFSSIQNLVTRGLQKERSVALESTLATIYQLCCFFNYFGDGQKSYPTGPNTHVSGLCIGALSAAAVSSSRSLDELVQAGIEAVLVSLKVGLLVSRTAALFSHQASANSSCSSSASWSYTVPDSQLPLALAEEAIASYTDKTNIPPLSSPYISARGQNSWTVSGPPAVLQGFLRSSQVVEAPRLTPLAVHAPYHAPHIFSVSDVENVIQAVGPVSSLSSKLPFISTSSCGSLSSGTRFQDLLFRAVEGILILPLDLRAAAENMRQVFEAVEDVSRCALIPISTGVCTSLKMSFSPVLADCVSIVDSIMEGTAADGGSKSAPATNPGDSKIAIIGMSGRFPEAADVEAFWAVLYKGLDVHRPVPKDRYDGELYYDPTGKKKNTCKVMHGCWINEPGLFDAKFFNISPKEAEQSDPGQRLALTTAYEALESAGVVAGRTPSTQRDRVGVFYGMTSDDYREVRASVCKPQCKPFPYTKANLTTGGNRAFTPGKINYFFKYCGPSVSVDTACSSSLAAIHLACNSIWRNECDTAVAGGTNVMSNPDSFVGLDRGHFLSRKGNCNNFDDEADGYCRADAVATVVLKRLEDAMADHDPILGVISGAHTNHSAESVSITRPHSGAQEEIFSKLLCESGVHPHQVSYVEMHGTGTQAGDATEMTSVLNCFAPSTGPRRLPHESLHLGSAKANVGHSESASGVTSLIKVLLMMEKNMIPPHCGIKSKINHRFPTDLEQRNVHIAKTATRWGRRREFDNIRRVFVNNFSAAGGNTALLVEDYPPLAAASSQRDSRTAHVVTTSAKCIQSLRGNLEKLKAFVQKTSSSESFMSKLSYTTTARRMHHPFRVAIPAAKPEELLSALDTELRRDSCRCSSESAVAFVFSGQGSQYGAMGKHLLHYTIFRGEIDSYDILAQRHGFPSIMPLVDGSVAIEHLEPLVVQLGTVCVQMALASLWIAFGMQPSYVVGHSLGHFAALKVSGALTASDTIYLVGMRARLLQNKCSIGSHAMLAVRSSAEDVQAYLDADVHDIACINSPQDTVVSGRVDDIDRLSERLLDKGIKATRVNVPFAFHSSQVEPILDELGAIASQVKFHSPCVPIGCPLQGKSLLPGETLTSEASHVKRHCRQTVNFRGILQSAKSDGLVSEKTAWIEIGPHTVCSMLVKANINHDVTAVPSLMRSHDGWQVLASSLATLYSKGLSVAWDEYHHDFECCKEVLRLPAYSWDNKRYWIEYVHDWLLTRGDPPVPAAAPSPAPVSSFSTASVHRIVRESVDRETVALTAECEFTSEQLREVVYGHVVNGNRVCTSSLYADFGVTLGTYILDKYRADLKDHSVDVQEMVVNKPLVHKEGLPMLLRIDVVHDMTASKSATMSIYSINAKGNKTVDHAKSSLCFGESRAWLRSWDSTQYYVERSIEWLKEKADQGLNSRLSSGVIYKLFSSLVEYSSAYKGMKEAIVNTEDFEATALVQFQVDEGNFRCNPMWVDSCGQLAGFLMNGHSKTPLDQVFINHGWQSFRTVRKFCKDKTYRTYVRMRCIEGTTYAGDVYIFDDEGIVGVCGSITFQGVPRRVLDAAMPAPKSPNKTRDHASPNATISRAKPPQGSSPASSAQLAQHSSIEPLKLDAALKSATTAIDPMHAVLRILSEEIGIPLTSLQYDLVFADYGVDSLLSLTISGRLREELDLDIESSVFETCATVGDFAVHLGLDTLASYQSSGESNVSGGVSPRSDSVAAMSSDVTTPPAQSPLGSMSSSPCEDLCAIIAEEIGVSMSVIKSDANLGELGMDSLMSLTVLSRLREELDLDLEGDFFVAHPTYSSFKHVFEQEIEPEIGLGESADLKKYHATSTLLQGSPKSALYTLFLLPDGSGSATSYATISAVGRDICVYGLNCPWLKSAEKLVQFGLKGLASLYVGEIRRRAPHGPYNLGGWSAGGICAYEAAIQFTREGEAVERLILLDSPNPIGLEKLPPRLFDFVNGLGLFGEGKAPDWLLAHFLAFIDALDQWKPVPWDKALDSTTPPPMTYILWAEDGLCKGIDARPEYRDDDPREMRWLLENRTNFGGNSWDILLGEGRLLTERIQDANHFTMLRRGKNAERVAAFIRSAFK.

An N-terminal acylcarrier protein transacylase domain (SAT) region spans residues 19 to 264 (FVFGDQTSCN…TPLAVHAPYH (246 aa)). A Ketosynthase family 3 (KS3) domain is found at 397 to 841 (DSKIAIIGMS…GGNTALLVED (445 aa)). Catalysis depends on for beta-ketoacyl synthase activity residues Cys-578, His-713, and His-757. The malonyl-CoA:ACP transacylase (MAT) domain stretch occupies residues 941-1245 (AFVFSGQGSQ…PSLMRSHDGW (305 aa)). Catalysis depends on Ser-1030, which acts as the For acyl/malonyl transferase activity. The tract at residues 1322–1636 (TASVHRIVRE…RRVLDAAMPA (315 aa)) is product template (PT) domain. The N-terminal hotdog fold stretch occupies residues 1326 to 1459 (HRIVRESVDR…SSLCFGESRA (134 aa)). A PKS/mFAS DH domain is found at 1326-1631 (HRIVRESVDR…FQGVPRRVLD (306 aa)). His-1358 serves as the catalytic Proton acceptor; for dehydratase activity. Positions 1486–1631 (LNSRLSSGVI…FQGVPRRVLD (146 aa)) are C-terminal hotdog fold. The Proton donor; for dehydratase activity role is filled by Asp-1545. The tract at residues 1633–1669 (AMPAPKSPNKTRDHASPNATISRAKPPQGSSPASSAQ) is disordered. The segment covering 1658–1669 (PPQGSSPASSAQ) has biased composition (low complexity). Positions 1692 to 1766 (IDPMHAVLRI…DFAVHLGLDT (75 aa)) constitute a Carrier 1 domain. An O-(pantetheine 4'-phosphoryl)serine modification is found at Ser-1726. Residues 1772 to 1783 (SSGESNVSGGVS) show a composition bias toward low complexity. The segment at 1772–1809 (SSGESNVSGGVSPRSDSVAAMSSDVTTPPAQSPLGSMS) is disordered. Residues 1794 to 1809 (SDVTTPPAQSPLGSMS) are compositionally biased toward polar residues. The Carrier 2 domain occupies 1807–1884 (SMSSSPCEDL…SFKHVFEQEI (78 aa)). Ser-1844 is subject to O-(pantetheine 4'-phosphoryl)serine. Residues 1896 to 2160 (LKKYHATSTL…ERVAAFIRSA (265 aa)) form a thioesterase (TE) domain region. Ser-1987 serves as the catalytic For thioesterase activity.

In terms of biological role, polyketide synthase; part of the Pks1 gene cluster that mediates the biosynthesis of an anthraquinone derivative pigment that contributes to conidial pigmentation that provides protection from UV radiation, heat and cold stress. The polyketide synthase Pks1 produces 1-acetyl-2,4,6,8-tetrahydroxy-9,10-anthraquinone though condensation of acetyl-CoA with malonyl-CoA. The dehydratase EthD and the laccase Mlac1 further convert the anthraquinone derivative into the final conidial pigment. The polypeptide is Polyketide synthase 1 (Metarhizium album (strain ARSEF 1941)).